A 351-amino-acid chain; its full sequence is 3-dehydroquinate synthase (351 aa).

Residues 60 to 65 (DGEEYK), 94 to 98 (GVISD), 118 to 119 (TT), Lys131, Lys140, and 158 to 161 (FLKT) each bind NAD(+). Positions 173, 239, and 256 each coordinate Zn(2+).

It belongs to the sugar phosphate cyclases superfamily. Dehydroquinate synthase family. Co(2+) is required as a cofactor. Requires Zn(2+) as cofactor. The cofactor is NAD(+).

It localises to the cytoplasm. It carries out the reaction 7-phospho-2-dehydro-3-deoxy-D-arabino-heptonate = 3-dehydroquinate + phosphate. It participates in metabolic intermediate biosynthesis; chorismate biosynthesis; chorismate from D-erythrose 4-phosphate and phosphoenolpyruvate: step 2/7. In terms of biological role, catalyzes the conversion of 3-deoxy-D-arabino-heptulosonate 7-phosphate (DAHP) to dehydroquinate (DHQ). The chain is 3-dehydroquinate synthase from Campylobacter jejuni subsp. jejuni serotype O:6 (strain 81116 / NCTC 11828).